The following is a 154-amino-acid chain: Transcriptional repressor NrdR (154 aa).

A zinc finger lies at 3–34 (CPFCRHPDSRVVDSRETDEGQAIRRRRSCPEC). An ATP-cone domain is found at 46 to 136 (LAVVKRSGVT…VYRSFSSAED (91 aa)).

The protein belongs to the NrdR family. The cofactor is Zn(2+).

Functionally, negatively regulates transcription of bacterial ribonucleotide reductase nrd genes and operons by binding to NrdR-boxes. The chain is Transcriptional repressor NrdR from Mycolicibacterium gilvum (strain PYR-GCK) (Mycobacterium gilvum (strain PYR-GCK)).